The chain runs to 152 residues: Xanthine-guanine phosphoribosyltransferase (152 aa).

5-phospho-alpha-D-ribose 1-diphosphate contacts are provided by residues 37–38, Arg-69, and 88–96; these read RG and DDLVDTGGT. Arg-69 is a binding site for GMP. Asp-89 contacts Mg(2+). 2 residues coordinate guanine: Asp-92 and Ile-135. 2 residues coordinate xanthine: Asp-92 and Ile-135. Residues 92 to 96 and 134 to 135 each bind GMP; these read DTGGT and WI.

The protein belongs to the purine/pyrimidine phosphoribosyltransferase family. XGPT subfamily. In terms of assembly, homotetramer. Mg(2+) is required as a cofactor.

The protein resides in the cell inner membrane. The enzyme catalyses GMP + diphosphate = guanine + 5-phospho-alpha-D-ribose 1-diphosphate. It carries out the reaction XMP + diphosphate = xanthine + 5-phospho-alpha-D-ribose 1-diphosphate. It catalyses the reaction IMP + diphosphate = hypoxanthine + 5-phospho-alpha-D-ribose 1-diphosphate. It participates in purine metabolism; GMP biosynthesis via salvage pathway; GMP from guanine: step 1/1. Its pathway is purine metabolism; XMP biosynthesis via salvage pathway; XMP from xanthine: step 1/1. Functionally, purine salvage pathway enzyme that catalyzes the transfer of the ribosyl-5-phosphate group from 5-phospho-alpha-D-ribose 1-diphosphate (PRPP) to the N9 position of the 6-oxopurines guanine and xanthine to form the corresponding ribonucleotides GMP (guanosine 5'-monophosphate) and XMP (xanthosine 5'-monophosphate), with the release of PPi. To a lesser extent, also acts on hypoxanthine. This Pectobacterium atrosepticum (strain SCRI 1043 / ATCC BAA-672) (Erwinia carotovora subsp. atroseptica) protein is Xanthine-guanine phosphoribosyltransferase.